A 132-amino-acid chain; its full sequence is MAEEGIAAGGVMDVNTALQEVLKTALIHDGLARGIREAAKALDKRQAHLCVLASNCDEPMYVKLVEALLAEHQINLIKVDDNKKLGEWVGLCKIDREGKPRKVVGCSCVVVKDYGKESQAKDVIEEYFKCKK.

An N-acetylalanine modification is found at Ala-2. An N6-succinyllysine modification is found at Lys-129.

The protein belongs to the eukaryotic ribosomal protein eS12 family. In terms of assembly, part of the small subunit (SSU) processome, composed of more than 70 proteins and the RNA chaperone small nucleolar RNA (snoRNA) U3. Subunit of the 40S ribosomal complex.

The protein resides in the nucleus. It is found in the nucleolus. Its function is as follows. Part of the small subunit (SSU) processome, first precursor of the small eukaryotic ribosomal subunit. During the assembly of the SSU processome in the nucleolus, many ribosome biogenesis factors, an RNA chaperone and ribosomal proteins associate with the nascent pre-rRNA and work in concert to generate RNA folding, modifications, rearrangements and cleavage as well as targeted degradation of pre-ribosomal RNA by the RNA exosome. Subunit of the 40S ribosomal complex. The polypeptide is Small ribosomal subunit protein eS12 (Rps12) (Rattus norvegicus (Rat)).